A 461-amino-acid polypeptide reads, in one-letter code: Armadillo repeat-containing X-linked protein 1 (461 aa).

Over 1–6 the chain is Mitochondrial intermembrane; the sequence is MGRTRE. Mitochondrion outer membrane (MOM)-targeting sequence stretches follow at residues 1 to 6 and 26 to 36; these read MGRTRE and RLTWGKDENEK. Residues 7–29 form a helical; Signal-anchor membrane-spanning segment; sequence AGCVAAGMVIGAGACYCVYRLTW. Residues 30–461 are Cytoplasmic-facing; the sequence is GKDENEKLWD…VKVLKVLTKL (432 aa). Disordered regions lie at residues 34 to 110 and 148 to 192; these read NEKL…HSEG and SSLP…PATA. Acidic residues predominate over residues 38–51; it reads WDDEDEEEEEEEES. Basic and acidic residues predominate over residues 96–110; it reads PDVKKEVYPESHSEG. A compositionally biased stretch (basic residues) spans 167 to 185; sequence SRARNRTSGKVKRKNRSKS. ARM repeat units lie at residues 203 to 243, 245 to 284, 366 to 406, and 423 to 461; these read PYKI…NNAA, SFNQNAIRELGGVPIIAKLIKTRDPIIREKTYNALNNLSV, PAMT…NIND, and SSLFFLFKESGVCVKKIKALASHKDLVVKVKVLKVLTKL.

It belongs to the eutherian X-chromosome-specific Armcx family. As to quaternary structure, interacts with MIRO1.

It localises to the mitochondrion. The protein resides in the mitochondrion outer membrane. Regulates mitochondrial transport during axon regeneration. Increases the proportion of motile mitochondria by recruiting stationary mitochondria into the motile pool. Enhances mitochondria movement and neurite growth in both adult axons and embryonic neurons. Promotes neuronal survival and axon regeneration after nerve injury. May link mitochondria to the Trak1-kinesin motor complex via its interaction with MIRO1. This chain is Armadillo repeat-containing X-linked protein 1 (Armcx1), found in Rattus norvegicus (Rat).